The primary structure comprises 361 residues: Peptide chain release factor 1 (361 aa).

Glutamine 240 bears the N5-methylglutamine mark.

This sequence belongs to the prokaryotic/mitochondrial release factor family. In terms of processing, methylated by PrmC. Methylation increases the termination efficiency of RF1.

Its subcellular location is the cytoplasm. Its function is as follows. Peptide chain release factor 1 directs the termination of translation in response to the peptide chain termination codons UAG and UAA. This is Peptide chain release factor 1 from Mycobacterium leprae (strain Br4923).